A 285-amino-acid polypeptide reads, in one-letter code: NADPH-dependent 7-cyano-7-deazaguanine reductase (285 aa).

Val80–Ser82 contacts substrate. Residue Ser82–Lys83 coordinates NADPH. The active-site Thioimide intermediate is Cys191. The active-site Proton donor is Asp198. A substrate-binding site is contributed by His231–Glu232. Arg260 to Gly261 serves as a coordination point for NADPH.

This sequence belongs to the GTP cyclohydrolase I family. QueF type 2 subfamily. In terms of assembly, homodimer.

The protein resides in the cytoplasm. It catalyses the reaction 7-aminomethyl-7-carbaguanine + 2 NADP(+) = 7-cyano-7-deazaguanine + 2 NADPH + 3 H(+). The protein operates within tRNA modification; tRNA-queuosine biosynthesis. In terms of biological role, catalyzes the NADPH-dependent reduction of 7-cyano-7-deazaguanine (preQ0) to 7-aminomethyl-7-deazaguanine (preQ1). This Psychrobacter cryohalolentis (strain ATCC BAA-1226 / DSM 17306 / VKM B-2378 / K5) protein is NADPH-dependent 7-cyano-7-deazaguanine reductase.